A 175-amino-acid polypeptide reads, in one-letter code: ADP-ribosylation factor 6 (175 aa).

A lipid anchor (N-myristoyl glycine) is attached at Gly-2. Residue Lys-3 is the site of N6-myristoyl lysine attachment. GTP-binding positions include Ala-23–Thr-28, Thr-41–Thr-44, Asp-63–Gln-67, Asn-122–Asp-125, and Cys-155–Ala-156.

This sequence belongs to the small GTPase superfamily. Arf family.

The protein localises to the cytoplasm. It localises to the cytosol. The protein resides in the cell membrane. It is found in the endosome membrane. Its subcellular location is the recycling endosome membrane. The protein localises to the cell projection. It localises to the filopodium membrane. The protein resides in the ruffle. It is found in the cleavage furrow. Its subcellular location is the midbody. The protein localises to the midbody ring. It carries out the reaction GTP + H2O = GDP + phosphate + H(+). Its function is as follows. GTP-binding protein involved in protein trafficking; regulates endocytic recycling and cytoskeleton remodeling. May modulate vesicle budding and uncoating within the Golgi apparatus. May contribute to the regulation of dendritic branching, filopodia extension and dendritic spine development. The polypeptide is ADP-ribosylation factor 6 (ARF6) (Gallus gallus (Chicken)).